The sequence spans 338 residues: Heat-inducible transcription repressor HrcA (338 aa).

Belongs to the HrcA family.

Its function is as follows. Negative regulator of class I heat shock genes (grpE-dnaK-dnaJ and groELS operons). Prevents heat-shock induction of these operons. This is Heat-inducible transcription repressor HrcA from Bacillus cereus (strain B4264).